The following is a 391-amino-acid chain: Casein kinase II subunit alpha (391 aa).

The tract at residues 36–41 (QDDYQL) is interaction with beta subunit. A Protein kinase domain is found at 39–324 (YQLVRKLGRG…AREAMEHPYF (286 aa)). ATP contacts are provided by residues 45–53 (LGRGKYSEV) and Lys68. Asp156 acts as the Proton acceptor in catalysis. Phosphothreonine; by CDK1 is present on residues Thr344 and Thr360. Phosphoserine; by CDK1 occurs at positions 362 and 370.

The protein belongs to the protein kinase superfamily. Ser/Thr protein kinase family. CK2 subfamily. Heterotetramer composed of two catalytic subunits (alpha chain and/or alpha' chain) and two regulatory subunits (beta chains). The tetramer can exist as a combination of 2 alpha/2 beta, 2 alpha'/2 beta or 1 alpha/1 alpha'/2 beta subunits. Also part of a CK2-SPT16-SSRP1 complex composed of SSRP1, SUPT16H, CSNK2A1, CSNK2A2 and CSNK2B, which forms following UV irradiation. Interacts with RNPS1. Interacts with SNAI1. Interacts with PML. Interacts with CCAR2. Interacts with HIRIP3. Phosphorylated at Thr-344, Thr-360, Ser-362 and Ser-370 by CDK1 in prophase and metaphase and dephosphorylated during anaphase. Phosphorylation does not directly affect casein kinase 2 activity, but may contribute to its regulation by forming binding sites for interacting proteins and/or targeting it to different compartments.

It is found in the nucleus. The enzyme catalyses L-seryl-[protein] + ATP = O-phospho-L-seryl-[protein] + ADP + H(+). It carries out the reaction L-threonyl-[protein] + ATP = O-phospho-L-threonyl-[protein] + ADP + H(+). Constitutively active protein kinase whose activity is not directly affected by phosphorylation. Seems to be regulated by level of expression and localization. Its function is as follows. Catalytic subunit of a constitutively active serine/threonine-protein kinase complex that phosphorylates a large number of substrates containing acidic residues C-terminal to the phosphorylated serine or threonine. Regulates numerous cellular processes, such as cell cycle progression, apoptosis and transcription, as well as viral infection. May act as a regulatory node which integrates and coordinates numerous signals leading to an appropriate cellular response. During mitosis, functions as a component of the p53/TP53-dependent spindle assembly checkpoint (SAC) that maintains cyclin-B-CDK1 activity and G2 arrest in response to spindle damage. Also required for p53/TP53-mediated apoptosis, phosphorylating 'Ser-392' of p53/TP53 following UV irradiation. Phosphorylates a number of DNA repair proteins in response to DNA damage, such as MDC1, MRE11, RAD9A, RAD51 and HTATSF1, promoting their recruitment to DNA damage sites. Can also negatively regulate apoptosis. Phosphorylates the caspases CASP9 and CASP2 and the apoptotic regulator NOL3. Phosphorylation protects CASP9 from cleavage and activation by CASP8, and inhibits the dimerization of CASP2 and activation of CASP8. Phosphorylates YY1, protecting YY1 from cleavage by CASP7 during apoptosis. Regulates transcription by direct phosphorylation of RNA polymerases I, II, III and IV. Also phosphorylates and regulates numerous transcription factors including NF-kappa-B, STAT1, CREB1, IRF1, IRF2, ATF1, ATF4, SRF, MAX, JUN, FOS, MYC and MYB. Phosphorylates Hsp90 and its co-chaperones FKBP4 and CDC37, which is essential for chaperone function. Mediates sequential phosphorylation of FNIP1, promoting its gradual interaction with Hsp90, leading to activate both kinase and non-kinase client proteins of Hsp90. Regulates Wnt signaling by phosphorylating CTNNB1 and the transcription factor LEF1. Acts as an ectokinase that phosphorylates several extracellular proteins. Plays an important role in the circadian clock function by phosphorylating BMAL1 at 'Ser-90' which is pivotal for its interaction with CLOCK and which controls CLOCK nuclear entry. Phosphorylates FMR1, promoting FMR1-dependent formation of a membraneless compartment. May phosphorylate histone H2A on 'Ser-1'. In Bos taurus (Bovine), this protein is Casein kinase II subunit alpha (CSNK2A1).